We begin with the raw amino-acid sequence, 69 residues long: DNA-directed RNA polymerase subunit omega (69 aa).

Belongs to the RNA polymerase subunit omega family. The RNAP catalytic core consists of 2 alpha, 1 beta, 1 beta' and 1 omega subunit. When a sigma factor is associated with the core the holoenzyme is formed, which can initiate transcription.

It carries out the reaction RNA(n) + a ribonucleoside 5'-triphosphate = RNA(n+1) + diphosphate. Promotes RNA polymerase assembly. Latches the N- and C-terminal regions of the beta' subunit thereby facilitating its interaction with the beta and alpha subunits. The polypeptide is DNA-directed RNA polymerase subunit omega (Symbiobacterium thermophilum (strain DSM 24528 / JCM 14929 / IAM 14863 / T)).